We begin with the raw amino-acid sequence, 682 residues long: MIDRYKHQQLRIGSVSPQQISAWANKILPNGEIIGEVTKPYTFHYKTNKPEKDGLFCERIFGPIKSGICACGNYRVIGDEKDDPKFCEQCGVEFVDSRIRRYQMGYIKLACPVTHVWYLKRLPSYIANLLDKPLKELEGLVYCDFSFARPIEKKPTFLRLRGSFEYEIQSWKYSIPLFFTTQGFDTFRNREISTGAGAIREQLDDLDLRIIIDYSLVEWKELGEEGPTGNEWEDRKIGRRKDFLVRRMELAKHFIRTNIEPEWMVLCLLPVLPPELRPIIQIDGGKLMSSDINELYRRVIYRNNTLTDLLTTSRSTPGELVMCQEKLVQEAVDTLLDNGIRGQPMRDGHNKVYKSFSDVIEGKEGRFRETLLGKRVDYSGRSVIVVGPSLSLHQCGLPREIAIELFQTFLIRGLIRQHLASNIGVAKSQIREKEPIVWEILQEVMRGHPVLLNRAPTLHRLGIQAFQPILVEGRAICLHPLVRKGFNADFDGDQMAVHVPLSLEAQSEARLLMFSHMNLLSPAIGDPISVPTQDMLIGLYVLTSGNRRGICANRYNPCNRRNYQNERIDDNNYRYTKEKEPFFCNSYDAIGAYRHKRINLYSPLWLRWQLDQRLIASKEAPIEVHYESLGTYHEIYGHYLIVRSVKKEIPCIYIRTTVGHISLYREIEEAIQGFCRACSYET.

Zn(2+) contacts are provided by C69, C71, C87, and C90. 3 residues coordinate Mg(2+): D489, D491, and D493.

It belongs to the RNA polymerase beta' chain family. RpoC1 subfamily. As to quaternary structure, in plastids the minimal PEP RNA polymerase catalytic core is composed of four subunits: alpha, beta, beta', and beta''. When a (nuclear-encoded) sigma factor is associated with the core the holoenzyme is formed, which can initiate transcription. Requires Mg(2+) as cofactor. Zn(2+) serves as cofactor.

The protein localises to the plastid. It is found in the chloroplast. The enzyme catalyses RNA(n) + a ribonucleoside 5'-triphosphate = RNA(n+1) + diphosphate. Functionally, DNA-dependent RNA polymerase catalyzes the transcription of DNA into RNA using the four ribonucleoside triphosphates as substrates. In Vitis vinifera (Grape), this protein is DNA-directed RNA polymerase subunit beta'.